A 614-amino-acid chain; its full sequence is UvrABC system protein C (614 aa).

Residues Thr14–Ile91 form the GIY-YIG domain. Residues Asp196–Leu231 enclose the UVR domain. Positions Leu595–Pro614 are disordered. Positions Ala599 to Pro614 are enriched in basic and acidic residues.

It belongs to the UvrC family. Interacts with UvrB in an incision complex.

Its subcellular location is the cytoplasm. Its function is as follows. The UvrABC repair system catalyzes the recognition and processing of DNA lesions. UvrC both incises the 5' and 3' sides of the lesion. The N-terminal half is responsible for the 3' incision and the C-terminal half is responsible for the 5' incision. This Streptococcus pneumoniae serotype 2 (strain D39 / NCTC 7466) protein is UvrABC system protein C.